Consider the following 407-residue polypeptide: Na(+)-translocating NADH-quinone reductase subunit F (407 aa).

The chain crosses the membrane as a helical span at residues 3 to 23 (IILGVVMFTLIVLALVLVILF). Residues 32 to 126 (GDITISINGD…DMDIELPEEI (95 aa)) enclose the 2Fe-2S ferredoxin-type domain. [2Fe-2S] cluster-binding residues include C69, C75, C78, and C110. The 141-residue stretch at 129 to 269 (VKKWECTVIS…SGPFGEFFAK (141 aa)) folds into the FAD-binding FR-type domain. The interval 272–389 (DAEMVFIGGG…PMMNAAVIGM (118 aa)) is catalytic.

Belongs to the NqrF family. In terms of assembly, composed of six subunits; NqrA, NqrB, NqrC, NqrD, NqrE and NqrF. [2Fe-2S] cluster serves as cofactor. Requires FAD as cofactor.

The protein localises to the cell inner membrane. It carries out the reaction a ubiquinone + n Na(+)(in) + NADH + H(+) = a ubiquinol + n Na(+)(out) + NAD(+). Functionally, NQR complex catalyzes the reduction of ubiquinone-1 to ubiquinol by two successive reactions, coupled with the transport of Na(+) ions from the cytoplasm to the periplasm. The first step is catalyzed by NqrF, which accepts electrons from NADH and reduces ubiquinone-1 to ubisemiquinone by a one-electron transfer pathway. This is Na(+)-translocating NADH-quinone reductase subunit F from Vibrio anguillarum (Listonella anguillarum).